A 288-amino-acid polypeptide reads, in one-letter code: 2-hydroxy-6-oxononadienedioate/2-hydroxy-6-oxononatrienedioate hydrolase (288 aa).

The AB hydrolase-1 domain occupies Ala-38–His-274. His-268 functions as the Proton acceptor in the catalytic mechanism.

It belongs to the AB hydrolase superfamily. MhpC family. Homodimer.

The catalysed reaction is (2Z,4E)-2-hydroxy-6-oxonona-2,4-dienedioate + H2O = (2Z)-2-hydroxypenta-2,4-dienoate + succinate + H(+). It catalyses the reaction (2Z,4E,7E)-2-hydroxy-6-oxonona-2,4,7-trienedioate + H2O = (2Z)-2-hydroxypenta-2,4-dienoate + fumarate + H(+). It functions in the pathway aromatic compound metabolism; 3-phenylpropanoate degradation. Its function is as follows. Catalyzes the cleavage of the C5-C6 bond of 2-hydroxy-6-oxononadienedioate and 2-hydroxy-6-oxononatrienedioate, a dienol ring fission product of the bacterial meta-cleavage pathway for degradation of phenylpropionic acid. This Burkholderia vietnamiensis (strain G4 / LMG 22486) (Burkholderia cepacia (strain R1808)) protein is 2-hydroxy-6-oxononadienedioate/2-hydroxy-6-oxononatrienedioate hydrolase.